A 436-amino-acid polypeptide reads, in one-letter code: Enolase (436 aa).

Gln167 is a binding site for (2R)-2-phosphoglycerate. Glu209 acts as the Proton donor in catalysis. The Mg(2+) site is built by Asp246, Glu291, and Asp318. (2R)-2-phosphoglycerate is bound by residues Lys343, Arg372, Ser373, and Lys394. Lys343 (proton acceptor) is an active-site residue.

This sequence belongs to the enolase family. As to quaternary structure, component of the RNA degradosome, a multiprotein complex involved in RNA processing and mRNA degradation. The cofactor is Mg(2+).

The protein resides in the cytoplasm. Its subcellular location is the secreted. It is found in the cell surface. The enzyme catalyses (2R)-2-phosphoglycerate = phosphoenolpyruvate + H2O. Its pathway is carbohydrate degradation; glycolysis; pyruvate from D-glyceraldehyde 3-phosphate: step 4/5. Functionally, catalyzes the reversible conversion of 2-phosphoglycerate (2-PG) into phosphoenolpyruvate (PEP). It is essential for the degradation of carbohydrates via glycolysis. The polypeptide is Enolase (Haemophilus influenzae (strain 86-028NP)).